The chain runs to 611 residues: DNA mismatch repair protein MutL (611 aa).

It belongs to the DNA mismatch repair MutL/HexB family.

Its function is as follows. This protein is involved in the repair of mismatches in DNA. It is required for dam-dependent methyl-directed DNA mismatch repair. May act as a 'molecular matchmaker', a protein that promotes the formation of a stable complex between two or more DNA-binding proteins in an ATP-dependent manner without itself being part of a final effector complex. The polypeptide is DNA mismatch repair protein MutL (Borreliella afzelii (strain PKo) (Borrelia afzelii)).